We begin with the raw amino-acid sequence, 633 residues long: MHRFLVKLSSSSSPFSNQLRSLKNQRLILPLLPSSKPFTSSSVSPPPSPLNASNRFGYPYSADLFRNLSPLNPNSRILGVNGITSSRCISSEAVRESIEYDVLIVGAGPAGLSAAIRLKQLSQEKNIDLSVCVVEKGAEVGGHIISGNVFEPLALDELLPHWRQEHAPIEIPASSDKFWFLTKDRAFSLPSPFDNKGNYVISLSQLVRWLGGKAEELGTEIYPGFSASEVLFDASDKVVGIATKDMGISKDGSKKENFQPGVDIKGRVTLFAEGCRGSLSERIIKKYKLREEVNAQHQTYALGIKEVWEIDESKHNPGEVIHTLGWPLDPKTYGGSFLYHMNDRQVALGLVVALNYHNPFLNPYEEFQKLKHHPAIKGILEGGTVLQYGARTLNEGGFQSIPYPVFPGGAIIGCSAGFLNVPKIKGTHTAMKSGMLAAEAAFGALHEGLNMNTYWDNLRDSWVWKELYAARNYRPAFEYGLLPGLAISAMEHYVLKGKVPFTLKHGKADHEATDLARKWTPIVYPKPDGVLSFDVPTSLYRSNTNHDHDQPSHLRLRDPKIPEKVNFPEYAAPESRYCPARVYEYIEDEEGKPKLQINAQNCLHCKACDIKDPKQNIEWTVPEGGGGPAYSLM.

A mitochondrion-targeting transit peptide spans 1-90 (MHRFLVKLSS…NGITSSRCIS (90 aa)). 102 to 116 (VLIVGAGPAGLSAAI) contributes to the FAD binding site. An intramembrane segment occupies 140–161 (VGGHIISGNVFEPLALDELLPH). A ubiquinone contacts are provided by Gly334 and Gly335. An intramembrane segment occupies 401 to 421 (IPYPVFPGGAIIGCSAGFLNV). Residues Cys578, Cys602, Cys605, and Cys608 each contribute to the [4Fe-4S] cluster site. One can recognise a 4Fe-4S ferredoxin-type domain in the interval 593 to 622 (PKLQINAQNCLHCKACDIKDPKQNIEWTVP).

Belongs to the ETF-QO/FixC family. [4Fe-4S] cluster is required as a cofactor. It depends on FAD as a cofactor.

It localises to the mitochondrion inner membrane. The enzyme catalyses a ubiquinone + reduced [electron-transfer flavoprotein] = a ubiquinol + oxidized [electron-transfer flavoprotein] + H(+). With respect to regulation, up-regulated by KIN10, by S1-bZIP specific dimers, and also by C/S1 bZIP heterodimers. Its function is as follows. Accepts electrons from ETF and reduces ubiquinone. May act downstream of IVD and D2HGDH in the degradation of phytol or chlorophyll during dark-induced senescence and sugar starvation. This is Electron transfer flavoprotein-ubiquinone oxidoreductase, mitochondrial (ETFQO) from Arabidopsis thaliana (Mouse-ear cress).